The primary structure comprises 79 residues: MPKELKELKDYLSVLKRPDARSVVVYKKKSKGGLLSTKFKVRCSRYLYTFSVPNQVKAAKVEATIPSHLEKKVITNKKN.

This sequence belongs to the eukaryotic ribosomal protein eL38 family.

The sequence is that of Large ribosomal subunit protein eL38 (RPL38) from Theileria parva (East coast fever infection agent).